The sequence spans 532 residues: FAD-dependent monooxygenase hkm7 (532 aa).

Residues 191 to 193 and Asp-261 each bind FAD; that span reads RIY.

The protein belongs to the PheA/TfdB FAD monooxygenase family.

It functions in the pathway secondary metabolite biosynthesis. Its function is as follows. FAD-dependent monooxygenase; part of the gene cluster that mediates the biosynthesis of hancockiamides, an unusual new family of N-cinnamoylated piperazines. The NRPS hkm10 and the NmrA-like reductase hkm9 are proposed to convert two molecules of L-Phe to the intermediary piperazine called xenocockiamide A. Xenocockiamide A is then converted to hancockiamide D via a series of hydroxylations and O-methylations. The tyrosinase hkm6 may catalyze an aromatic hydroxylation, then the 2-oxoglutarate-dependent Fe(II) dioxygenase hkm4 and the FAD-dependent phenol hydroxylase hkm7 may catalyze consecutive hydroxylations to install 2 more hydroxy groups, and the methyltransferase hkm8 probably catalyzes two methylations using 2 molecules of S-adenosyl-L-methionine (SAM). The NRPS hkm11 activates and transfers trans-cinnamate supplied by the PAL hkm12 to hancockiamide D and produces hancockiamide A. NRPS Hkm11 has the flexibility to tolerate the bulky hancockiamide G as a substrate and the absence of the acetyl-transferase hkm3 opens up the opportunity for hkm11 to introduce a second N-cinnamoyl moiety. The cytochrome P450 monooxygenase hkm5 catalyzes the methylenedioxy bridge formation, converting hancockiamide A into hancockiamide G. Hkm5 can also convert hancockiamide B into hancockiamide C, and hancockiamide D into hancockiamide H. The N-acetyltransferase hkm3 finally transfers an acetyl group to 1-N of piperazine, converting hancockiamide A into hancockiamide B and hancockiamide G into hancockiamide C. In Aspergillus hancockii, this protein is FAD-dependent monooxygenase hkm7.